Consider the following 325-residue polypeptide: D site-binding protein (325 aa).

Disordered regions lie at residues 1-99, 127-200, and 229-255; these read MARP…APGL, GLPP…DTVE, and RFSE…EQKD. Over residues 17 to 28 the composition is skewed to gly residues; sequence GPAGTPPGGGAL. 2 stretches are compositionally biased toward low complexity: residues 29-38 and 57-80; these read LGLRSLLQGT and ALPA…PAGA. S86 is modified (phosphoserine). The segment covering 129-153 has biased composition (pro residues); it reads PPSPPPPGGPSPEPSPARTPAPSPG. Low complexity predominate over residues 157–167; it reads CGSASPRSSPG. One can recognise a bZIP domain in the interval 255–318; sequence DEKYWSRRYK…SHYRAVLSRY (64 aa). Residues 257–279 are basic motif; the sequence is KYWSRRYKNNEAAKRSRDARRLK. The interval 283–297 is leucine-zipper; the sequence is ISVRAAFLEKENALL.

This sequence belongs to the bZIP family. PAR subfamily. Binds DNA as a homodimer or a heterodimer. Can form a heterodimer with TEF. Ubiquitously expressed. Expressed in the suprachiasmatic nuclei (SCN) and in most peripheral tissues, with a strong circadian rhythmicity.

It localises to the nucleus. Its function is as follows. This transcriptional activator recognizes and binds to the sequence 5'-RTTAYGTAAY-3' found in the promoter of genes such as albumin, CYP2A4 and CYP2A5. It is not essential for circadian rhythm generation, but modulates important clock output genes. May be a direct target for regulation by the circadian pacemaker component clock. May affect circadian period and sleep regulation. The chain is D site-binding protein (DBP) from Homo sapiens (Human).